We begin with the raw amino-acid sequence, 132 residues long: Small ribosomal subunit protein uS8c (132 aa).

The protein belongs to the universal ribosomal protein uS8 family. As to quaternary structure, part of the 30S ribosomal subunit.

The protein localises to the plastid. It is found in the chloroplast. One of the primary rRNA binding proteins, it binds directly to 16S rRNA central domain where it helps coordinate assembly of the platform of the 30S subunit. This is Small ribosomal subunit protein uS8c (rps8) from Staurastrum punctulatum (Green alga).